The following is a 334-amino-acid chain: MASKTLRVLFLGPKGTYSHQAALQQFQSTSDVEYLPAASIPQCFNQLENDTSIDYSVVPLENSTNGQVVFSYDLLRDRMIKKALSLPAPADTNRITPDIEVIAEQYVPITHCLISPIQLPNGIASLGNFEEVIIHSHPQVWGQVECYLRSMAEKFPQVTFIRLDCSSTSESVNQCIRSSTADCDNILHLAIASETAAQLHKAYIIEHSINDKLGNTTRFLVLKRRENAGDNEVEDTGLLRVNLLTFTTRQDDPGSLVDVLNILKIHSLNMCSINSRPFHLDEHDRNWRYLFFIEYYTEKNTPKNKEKFYEDISDKSKQWCLWGTFPRNERYYHK.

The Prephenate dehydratase domain maps to 7–224; sequence RVLFLGPKGT…NTTRFLVLKR (218 aa). Positions 244–322 constitute an ACT domain; the sequence is LTFTTRQDDP…SDKSKQWCLW (79 aa).

The protein localises to the cytoplasm. The catalysed reaction is prephenate + H(+) = 3-phenylpyruvate + CO2 + H2O. It functions in the pathway amino-acid biosynthesis; L-phenylalanine biosynthesis; phenylpyruvate from prephenate: step 1/1. Functionally, catayzes the decarboxylation/dehydration of prephenate to phenylpyruvate. The polypeptide is Probable prephenate dehydratase (PHA2) (Saccharomyces cerevisiae (strain ATCC 204508 / S288c) (Baker's yeast)).